Reading from the N-terminus, the 244-residue chain is Fumarate reductase iron-sulfur subunit (244 aa).

Residue Tyr-14 participates in a menaquinone binding. Residues 16 to 97 (PEVDTAPHSA…GMKVEALANF (82 aa)) enclose the 2Fe-2S ferredoxin-type domain. [2Fe-2S] cluster contacts are provided by Cys-58, Cys-63, Cys-66, and Cys-78. One can recognise a 4Fe-4S ferredoxin-type domain in the interval 140-169 (MAKYHQFSGCINCGLCYAACPQFGLNPEFI). [4Fe-4S] cluster is bound by residues Cys-149, Cys-152, and Cys-155. [3Fe-4S] cluster is bound by residues Cys-159, Cys-205, and Cys-211. Cys-215 serves as a coordination point for [4Fe-4S] cluster. 226–229 (QQGK) serves as a coordination point for a menaquinone.

The protein belongs to the succinate dehydrogenase/fumarate reductase iron-sulfur protein family. As to quaternary structure, fumarate dehydrogenase forms part of an enzyme complex containing four subunits: a flavoprotein, an iron-sulfur, and two hydrophobic anchor proteins. [2Fe-2S] cluster serves as cofactor. The cofactor is [3Fe-4S] cluster. It depends on [4Fe-4S] cluster as a cofactor.

Its subcellular location is the cell inner membrane. It catalyses the reaction a quinone + succinate = fumarate + a quinol. The enzyme catalyses a menaquinone + succinate = a menaquinol + fumarate. Its function is as follows. Two distinct, membrane-bound, FAD-containing enzymes are responsible for the catalysis of fumarate and succinate interconversion; the fumarate reductase is used in anaerobic growth, and the succinate dehydrogenase is used in aerobic growth. This Escherichia coli O157:H7 protein is Fumarate reductase iron-sulfur subunit (frdB).